The sequence spans 253 residues: Imidazole glycerol phosphate synthase subunit HisF (253 aa).

Residues D11 and D130 contribute to the active site.

This sequence belongs to the HisA/HisF family. As to quaternary structure, heterodimer of HisH and HisF.

The protein resides in the cytoplasm. The catalysed reaction is 5-[(5-phospho-1-deoxy-D-ribulos-1-ylimino)methylamino]-1-(5-phospho-beta-D-ribosyl)imidazole-4-carboxamide + L-glutamine = D-erythro-1-(imidazol-4-yl)glycerol 3-phosphate + 5-amino-1-(5-phospho-beta-D-ribosyl)imidazole-4-carboxamide + L-glutamate + H(+). It participates in amino-acid biosynthesis; L-histidine biosynthesis; L-histidine from 5-phospho-alpha-D-ribose 1-diphosphate: step 5/9. IGPS catalyzes the conversion of PRFAR and glutamine to IGP, AICAR and glutamate. The HisF subunit catalyzes the cyclization activity that produces IGP and AICAR from PRFAR using the ammonia provided by the HisH subunit. This is Imidazole glycerol phosphate synthase subunit HisF from Caldanaerobacter subterraneus subsp. tengcongensis (strain DSM 15242 / JCM 11007 / NBRC 100824 / MB4) (Thermoanaerobacter tengcongensis).